We begin with the raw amino-acid sequence, 444 residues long: Cysteine proteinase 2 (444 aa).

Positions 1 to 19 form a signal peptide, or 27; the sequence is MATSRAALCAVAVVCVVLA. The propeptide at 20-124 is activation peptide; that stretch reads AACAPARAIH…HYRKARADLS (105 aa). A disulfide bridge links cysteine 147 with cysteine 188. Cysteine 150 is an active-site residue. N-linked (GlcNAc...) asparagine glycosylation occurs at asparagine 228. Catalysis depends on residues histidine 289 and asparagine 309. Asparagine 372 carries an N-linked (GlcNAc...) asparagine glycan.

It belongs to the peptidase C1 family.

It localises to the lysosome. The cysteine proteinases have a potential role in host-parasite interaction and virulence. This is Cysteine proteinase 2 (CYS2) from Leishmania pifanoi.